A 308-amino-acid chain; its full sequence is Aspartate carbamoyltransferase catalytic subunit (308 aa).

Residues arginine 55 and threonine 56 each coordinate carbamoyl phosphate. Lysine 83 lines the L-aspartate pocket. The carbamoyl phosphate site is built by arginine 105, histidine 133, and glutamine 136. L-aspartate is bound by residues arginine 166 and arginine 220. Residues glycine 261 and proline 262 each contribute to the carbamoyl phosphate site.

The protein belongs to the aspartate/ornithine carbamoyltransferase superfamily. ATCase family. As to quaternary structure, heterododecamer (2C3:3R2) of six catalytic PyrB chains organized as two trimers (C3), and six regulatory PyrI chains organized as three dimers (R2).

The enzyme catalyses carbamoyl phosphate + L-aspartate = N-carbamoyl-L-aspartate + phosphate + H(+). It participates in pyrimidine metabolism; UMP biosynthesis via de novo pathway; (S)-dihydroorotate from bicarbonate: step 2/3. In terms of biological role, catalyzes the condensation of carbamoyl phosphate and aspartate to form carbamoyl aspartate and inorganic phosphate, the committed step in the de novo pyrimidine nucleotide biosynthesis pathway. The sequence is that of Aspartate carbamoyltransferase catalytic subunit from Chlorobium limicola (strain DSM 245 / NBRC 103803 / 6330).